Here is a 373-residue protein sequence, read N- to C-terminus: Putative ribosome biogenesis protein C8F11.04 (373 aa).

The segment at Arg265–His373 is disordered. Over residues Lys292–Lys320 the composition is skewed to basic and acidic residues. Residues Lys347 to Thr359 are compositionally biased toward polar residues. Basic residues predominate over residues Lys362–His373.

Belongs to the universal ribosomal protein uL1 family. Highly divergent. As to quaternary structure, component of the 90S pre-ribosomes.

It is found in the nucleus. Its subcellular location is the nucleolus. Functionally, involved in rRNA-processing and ribosome biosynthesis. In Schizosaccharomyces pombe (strain 972 / ATCC 24843) (Fission yeast), this protein is Putative ribosome biogenesis protein C8F11.04.